The chain runs to 37 residues: Large ribosomal subunit protein bL36 (37 aa).

It belongs to the bacterial ribosomal protein bL36 family.

The protein is Large ribosomal subunit protein bL36 of Mycoplasmopsis pulmonis (strain UAB CTIP) (Mycoplasma pulmonis).